The chain runs to 348 residues: Bombesin receptor-activated protein C6orf89 homolog (348 aa).

Residues 1–58 are Cytoplasmic-facing; that stretch reads MDLAANEISIYDKLSETVDLVRQTGHQCGMSEKAIEKFIRQLLEKNEPQRGPPQYPLL. Residues 59-79 form a helical membrane-spanning segment; sequence IAMYKVLLTLGLILFTAYFVI. The Extracellular portion of the chain corresponds to 80-348; the sequence is QPFSSLAPEP…ICDGTTLSEL (269 aa).

As to quaternary structure, homodimer. Interacts with BRS3. Interacts (via N-terminus) with SIN3B. Post-translationally, glycosylated.

It localises to the golgi apparatus membrane. The protein localises to the cytoplasm. Functionally, exhibits histone deacetylase (HDAC) enhancer properties. May play a role in cell cycle progression and wound repair of bronchial epithelial cells. The sequence is that of Bombesin receptor-activated protein C6orf89 homolog from Rattus norvegicus (Rat).